Consider the following 730-residue polypeptide: ABC transporter G family member 20 (730 aa).

In terms of domain architecture, ABC transporter spans 15 to 244 (ISLKNVCRGY…YESQTLEEVF (230 aa)). Residue 47–54 (GASGSGKT) participates in ATP binding. The disordered stretch occupies residues 281-303 (VNNNNNNNNNNNNNNYNNNDDEE). Residues 282–298 (NNNNNNNNNNNNNNYNN) are compositionally biased toward low complexity. The region spanning 489 to 717 (SFETLAKQQA…FIAVLALNEK (229 aa)) is the ABC transmembrane type-2 domain. A run of 5 helical transmembrane segments spans residues 520–540 (FIDF…AISI), 572–592 (FLGH…IAIY), 602–622 (IALV…LGLV), 634–654 (IQLS…LWPL), and 692–712 (VWVA…IAVL).

It belongs to the ABC transporter superfamily.

The protein localises to the membrane. The protein is ABC transporter G family member 20 (abcG20) of Dictyostelium discoideum (Social amoeba).